Here is a 175-residue protein sequence, read N- to C-terminus: Adenine phosphoribosyltransferase (175 aa).

This sequence belongs to the purine/pyrimidine phosphoribosyltransferase family. As to quaternary structure, homodimer.

The protein localises to the cytoplasm. The enzyme catalyses AMP + diphosphate = 5-phospho-alpha-D-ribose 1-diphosphate + adenine. It participates in purine metabolism; AMP biosynthesis via salvage pathway; AMP from adenine: step 1/1. Catalyzes a salvage reaction resulting in the formation of AMP, that is energically less costly than de novo synthesis. This chain is Adenine phosphoribosyltransferase, found in Synechococcus sp. (strain JA-3-3Ab) (Cyanobacteria bacterium Yellowstone A-Prime).